Here is a 697-residue protein sequence, read N- to C-terminus: Polyribonucleotide nucleotidyltransferase (697 aa).

Mg(2+) contacts are provided by Asp-488 and Asp-494. Residues 555–614 (PTLLTLKINPDKIRDVIGKGGATIRALTEETGCTIDIEDDGSVKIYGETREKADEAVRRV) form the KH domain. The region spanning 624-692 (GAIYEGKVTR…QRGRIKLSMK (69 aa)) is the S1 motif domain.

This sequence belongs to the polyribonucleotide nucleotidyltransferase family. In terms of assembly, component of the RNA degradosome, which is a multiprotein complex involved in RNA processing and mRNA degradation. Mg(2+) is required as a cofactor.

The protein resides in the cytoplasm. It carries out the reaction RNA(n+1) + phosphate = RNA(n) + a ribonucleoside 5'-diphosphate. Functionally, involved in mRNA degradation. Catalyzes the phosphorolysis of single-stranded polyribonucleotides processively in the 3'- to 5'-direction. The protein is Polyribonucleotide nucleotidyltransferase of Alcanivorax borkumensis (strain ATCC 700651 / DSM 11573 / NCIMB 13689 / SK2).